The following is a 682-amino-acid chain: Methionine--tRNA ligase (682 aa).

The short motif at 14-24 (PYANGPVHLGH) is the 'HIGH' region element. Zn(2+) contacts are provided by Cys-145, Cys-148, Cys-158, and Cys-161. The short motif at 331–335 (KMSKS) is the 'KMSKS' region element. Residue Lys-334 participates in ATP binding. The tRNA-binding domain occupies 580 to 682 (AFAAVDLRVA…SGAKPGQRIK (103 aa)).

Belongs to the class-I aminoacyl-tRNA synthetase family. MetG type 1 subfamily. In terms of assembly, homodimer. Requires Zn(2+) as cofactor.

It localises to the cytoplasm. The catalysed reaction is tRNA(Met) + L-methionine + ATP = L-methionyl-tRNA(Met) + AMP + diphosphate. Its function is as follows. Is required not only for elongation of protein synthesis but also for the initiation of all mRNA translation through initiator tRNA(fMet) aminoacylation. This chain is Methionine--tRNA ligase, found in Pseudomonas syringae pv. tomato (strain ATCC BAA-871 / DC3000).